Reading from the N-terminus, the 434-residue chain is Glutamyl-tRNA reductase (434 aa).

Residues 49 to 52 (TCNR), S109, 114 to 116 (EPQ), and Q120 each bind substrate. C50 acts as the Nucleophile in catalysis. 189-194 (GAGEMC) is a binding site for NADP(+).

The protein belongs to the glutamyl-tRNA reductase family. As to quaternary structure, homodimer.

It carries out the reaction (S)-4-amino-5-oxopentanoate + tRNA(Glu) + NADP(+) = L-glutamyl-tRNA(Glu) + NADPH + H(+). The protein operates within porphyrin-containing compound metabolism; protoporphyrin-IX biosynthesis; 5-aminolevulinate from L-glutamyl-tRNA(Glu): step 1/2. Its function is as follows. Catalyzes the NADPH-dependent reduction of glutamyl-tRNA(Glu) to glutamate 1-semialdehyde (GSA). This is Glutamyl-tRNA reductase from Citrifermentans bemidjiense (strain ATCC BAA-1014 / DSM 16622 / JCM 12645 / Bem) (Geobacter bemidjiensis).